The sequence spans 200 residues: Putative 3-methyladenine DNA glycosylase (200 aa).

It belongs to the DNA glycosylase MPG family.

The protein is Putative 3-methyladenine DNA glycosylase of Rhodopseudomonas palustris (strain BisB18).